The primary structure comprises 133 residues: Peptide methionine sulfoxide reductase MsrB (133 aa).

The region spanning 8 to 130 (LEEWRAMLDP…NSVCLDFKPR (123 aa)) is the MsrB domain. The Zn(2+) site is built by Cys47, Cys50, Cys96, and Cys99. Catalysis depends on Cys119, which acts as the Nucleophile.

This sequence belongs to the MsrB Met sulfoxide reductase family. Zn(2+) serves as cofactor.

The enzyme catalyses L-methionyl-[protein] + [thioredoxin]-disulfide + H2O = L-methionyl-(R)-S-oxide-[protein] + [thioredoxin]-dithiol. The chain is Peptide methionine sulfoxide reductase MsrB from Pseudomonas putida (strain W619).